We begin with the raw amino-acid sequence, 333 residues long: HTH-type transcriptional regulator pepR1 (333 aa).

The 55-residue stretch at Val6 to Ser60 folds into the HTH lacI-type domain. A DNA-binding region (H-T-H motif) is located at residues Ile8 to Asn27.

In terms of biological role, transcriptional regulator of the pepQ gene for prolidase. This is HTH-type transcriptional regulator pepR1 (pepR1) from Lactobacillus delbrueckii subsp. lactis.